An 88-amino-acid polypeptide reads, in one-letter code: MTLLASISTIGNVKSISKSNNFSSLSNSSLQSSNSIQCGCGGGSPLIGTVGNLVGGVLVGTGIILGTVVGTVNGVVGGLLSGPNCGCH.

The protein belongs to the hssA/B family.

The chain is HssA/B-like protein 13 (hssl13) from Dictyostelium discoideum (Social amoeba).